Consider the following 218-residue polypeptide: Small ribosomal subunit protein uS3c (218 aa).

Positions 47 to 118 (VQNNIRISSG…KLNIAITRIS (72 aa)) constitute a KH type-2 domain.

The protein belongs to the universal ribosomal protein uS3 family. In terms of assembly, part of the 30S ribosomal subunit.

It localises to the plastid. The protein resides in the chloroplast. This chain is Small ribosomal subunit protein uS3c (rps3), found in Draba nemorosa (Woodland whitlowgrass).